Here is a 221-residue protein sequence, read N- to C-terminus: Stromal cell-derived factor 2-like protein 1 (221 aa).

The first 28 residues, Met-1–Ala-28, serve as a signal peptide directing secretion. MIR domains lie at Ala-33–Gly-87, Gly-95–Ser-150, and Gly-151–Gly-205. Residue Ser-215 is modified to Phosphoserine. The Prevents secretion from ER signature appears at His-218–Leu-221.

Part of a large chaperone multiprotein complex comprising CABP1, DNAJB11, HSP90B1, HSPA5, HYOU, PDIA2, PDIA4, PPIB, SDF2L1, UGGT1 and very small amounts of ERP29, but not, or at very low levels, CALR nor CANX. As to expression, ubiquitously expressed with high expression in testis, moderate expression in the pancreas, spleen, prostate, small intestine and colon. Very low expression is seen in brain and skeletal muscle.

Its subcellular location is the endoplasmic reticulum lumen. This chain is Stromal cell-derived factor 2-like protein 1 (SDF2L1), found in Homo sapiens (Human).